A 216-amino-acid chain; its full sequence is GTP-binding nuclear protein spi1 (216 aa).

Positions 6–170 constitute a Small GTPase Ran-type domain; sequence NVPTFKLVLV…LWLARKLVGN (165 aa). A GTP-binding site is contributed by 17–24; sequence DGGTGKTT. A Phosphothreonine modification is found at T20. A switch-I region spans residues 36 to 44; the sequence is KKYIATLGV. Residues G67, 121–124, and 149–151 contribute to the GTP site; these read NKVD and SAK. Positions 67–83 are switch-II; that stretch reads GQEKLGGLRDGYYIQGQ.

It belongs to the small GTPase superfamily. Ran family. In terms of assembly, oligomer of dis3, pim1 and spi1. Found in a nuclear export complex with RanGTP, exportin and pre-miRNA. Interacts with fft3.

It is found in the nucleus. Functionally, GTP-binding protein involved in nucleocytoplasmic transport. Required for the import of protein into the nucleus and also for RNA export. The chain is GTP-binding nuclear protein spi1 (spi1) from Schizosaccharomyces pombe (strain 972 / ATCC 24843) (Fission yeast).